The following is a 475-amino-acid chain: Lipoprotein lipase (475 aa).

Positions 1-27 (MESKALLVLTLAVWLQSLTASRGGVAA) are cleaved as a signal peptide. An interaction with GPIHBP1 region spans residues 32 to 53 (RDFIDIESKFALRTPEDTAEDT). Cys54 and Cys67 are joined by a disulfide. An N-linked (GlcNAc...) asparagine glycan is attached at Asn70. 3'-nitrotyrosine is present on Tyr121. Ser159 serves as the catalytic Nucleophile. Catalysis depends on Asp183, which acts as the Charge relay system. Residue Tyr191 is modified to 3'-nitrotyrosine. 4 residues coordinate Ca(2+): Ala194, Arg197, Ser199, and Asp202. An intrachain disulfide couples Cys243 to Cys266. An essential for determining substrate specificity region spans residues 243 to 266 (CNIGEAIRVIAERGLGDVDQLVKC). Catalysis depends on His268, which acts as the Charge relay system. Intrachain disulfides connect Cys291–Cys310 and Cys302–Cys305. Residues 341 to 464 (FHYQVKIHFS…KGKAPAVFVK (124 aa)) enclose the PLAT domain. Tyr343 is subject to 3'-nitrotyrosine. An N-linked (GlcNAc...) asparagine glycan is attached at Asn386. Residues 417-421 (WSDWW) are important for interaction with lipoprotein particles. The important for heparin binding stretch occupies residues 430–434 (KIRVK). Residues 443–467 (IFCSREKVSHLQKGKAPAVFVKCHD) are interaction with GPIHBP1. Residues Cys445 and Cys465 are joined by a disulfide bond.

This sequence belongs to the AB hydrolase superfamily. Lipase family. Homodimer. Interacts with GPIHBP1 with 1:1 stoichiometry. Interacts with APOC2; the interaction activates LPL activity in the presence of lipids. Interaction with heparan sulfate proteoglycans is required to protect LPL against loss of activity. Associates with lipoprotein particles in blood plasma. Interacts with LMF1 and SEL1L; interaction with SEL1L is required to prevent aggregation of newly synthesized LPL in the endoplasmic reticulum (ER), and for normal export of LPL from the ER to the extracellular space. Interacts with SORL1; SORL1 acts as a sorting receptor, promoting LPL localization to endosomes and later to lysosomes, leading to degradation of newly synthesized LPL. Tyrosine nitration after lipopolysaccharide (LPS) challenge down-regulates the lipase activity. In terms of tissue distribution, detected in blood plasma. Detected in milk (at protein level).

Its subcellular location is the cell membrane. The protein localises to the secreted. It is found in the extracellular space. It localises to the extracellular matrix. The enzyme catalyses a triacylglycerol + H2O = a diacylglycerol + a fatty acid + H(+). The catalysed reaction is a 1,2-diacyl-sn-glycero-3-phosphocholine + H2O = a 2-acyl-sn-glycero-3-phosphocholine + a fatty acid + H(+). It carries out the reaction 1,2,3-tri-(9Z-octadecenoyl)-glycerol + H2O = di-(9Z)-octadecenoylglycerol + (9Z)-octadecenoate + H(+). It catalyses the reaction 1,2-di-(9Z-octadecenoyl)-sn-glycero-3-phosphocholine + H2O = (9Z-octadecenoyl)-sn-glycero-3-phosphocholine + (9Z)-octadecenoate + H(+). The enzyme catalyses 1,2,3-tributanoylglycerol + H2O = dibutanoylglycerol + butanoate + H(+). The catalysed reaction is 1,2-dihexadecanoyl-sn-glycero-3-phosphocholine + H2O = hexadecanoyl-sn-glycero-3-phosphocholine + hexadecanoate + H(+). With respect to regulation, the apolipoprotein APOC2 acts as a coactivator of LPL activity. Ca(2+) binding promotes protein stability and formation of the active homodimer. Interaction with GPIHBP1 protects LPL against inactivation by ANGPTL4. Inhibited by NaCl. Its function is as follows. Key enzyme in triglyceride metabolism. Catalyzes the hydrolysis of triglycerides from circulating chylomicrons and very low density lipoproteins (VLDL), and thereby plays an important role in lipid clearance from the blood stream, lipid utilization and storage. Although it has both phospholipase and triglyceride lipase activities it is primarily a triglyceride lipase with low but detectable phospholipase activity. Mediates margination of triglyceride-rich lipoprotein particles in capillaries. Recruited to its site of action on the luminal surface of vascular endothelium by binding to GPIHBP1 and cell surface heparan sulfate proteoglycans. This is Lipoprotein lipase (LPL) from Homo sapiens (Human).